Reading from the N-terminus, the 376-residue chain is Major capsid protein (376 aa).

It localises to the virion. In terms of biological role, assembles to form an icosahedral capsid. This Pseudomonas aeruginosa (Bacteriophage KPP25) protein is Major capsid protein.